Reading from the N-terminus, the 334-residue chain is MTTNNPVCASDAHMEMYSSKLYTSALFLNLIIATTSMILTGFAIQKLFMESIINISTRMFLFCGLMCCSLHQTAYIVLRIQVIYQVFFKLSEPCNLYYPAIDCKYVTFSLVAGNTGMIFIQSAMTIDRIFATIFPKLWPKLKYWPGVVLSILMIACNYANVQIIFWGDPLTEYVPTCGQFPSKSVNRFQTFLAIALYMSIAHMVINVIILYINVLQDRQQSKSFNVNQRYQSREALKSSQAIFFLSMSQFFACLIYSVFTKVFLEFQLNLSPLQSGLVLALSYTTPYACIAIPSLIIFTFRFIKNQRLRNINELRSQTETGDECMRKIAKIWEK.

The Extracellular portion of the chain corresponds to 1 to 23 (MTTNNPVCASDAHMEMYSSKLYT). A helical membrane pass occupies residues 24 to 44 (SALFLNLIIATTSMILTGFAI). The Cytoplasmic portion of the chain corresponds to 45-57 (QKLFMESIINIST). A helical membrane pass occupies residues 58 to 80 (RMFLFCGLMCCSLHQTAYIVLRI). Over 81-105 (QVIYQVFFKLSEPCNLYYPAIDCKY) the chain is Extracellular. A helical transmembrane segment spans residues 106–126 (VTFSLVAGNTGMIFIQSAMTI). Topologically, residues 127–145 (DRIFATIFPKLWPKLKYWP) are cytoplasmic. Residues 146–166 (GVVLSILMIACNYANVQIIFW) form a helical membrane-spanning segment. The Extracellular segment spans residues 167–191 (GDPLTEYVPTCGQFPSKSVNRFQTF). A helical membrane pass occupies residues 192 to 212 (LAIALYMSIAHMVINVIILYI). The Cytoplasmic portion of the chain corresponds to 213-239 (NVLQDRQQSKSFNVNQRYQSREALKSS). The chain crosses the membrane as a helical span at residues 240–260 (QAIFFLSMSQFFACLIYSVFT). Topologically, residues 261–277 (KVFLEFQLNLSPLQSGL) are extracellular. Residues 278-298 (VLALSYTTPYACIAIPSLIIF) traverse the membrane as a helical segment. The Cytoplasmic segment spans residues 299–334 (TFRFIKNQRLRNINELRSQTETGDECMRKIAKIWEK).

The protein belongs to the nematode receptor-like protein sra family. In terms of tissue distribution, expressed in interneurons AIY and AVB in L1 larvae. In adults, strong expression is seen in AIY and AIA but only weak expression in AVB.

It localises to the membrane. Its function is as follows. A G protein-coupled receptor required for olfactory imprinting a requisite in ordorant response such as benzaldehyde and isoamylalcohol. This is Serpentine receptor class alpha-11 (sra-11) from Caenorhabditis elegans.